We begin with the raw amino-acid sequence, 637 residues long: DNA primase (637 aa).

The segment at 39–63 (CPFHGEKTPSFNVNAEKGFYHCFGC) adopts a CHC2-type zinc-finger fold. The Toprim domain maps to 257–338 (HEVYLMEGFM…QIVKVPEGLD (82 aa)). Mg(2+) contacts are provided by E263, D307, and D309.

It belongs to the DnaG primase family. Monomer. Interacts with DnaB. The cofactor is Zn(2+). Requires Mg(2+) as cofactor.

The catalysed reaction is ssDNA + n NTP = ssDNA/pppN(pN)n-1 hybrid + (n-1) diphosphate.. Its function is as follows. RNA polymerase that catalyzes the synthesis of short RNA molecules used as primers for DNA polymerase during DNA replication. In Lactococcus lactis subsp. lactis (strain IL1403) (Streptococcus lactis), this protein is DNA primase.